The primary structure comprises 469 residues: E3 ubiquitin-protein ligase TRAIP (469 aa).

An RING-type zinc finger spans residues 7-50 (CTICSDFFDHSRDVAAIHCGHTFHLQCLIQWFETAPSRTCPQCR). 2 coiled-coil regions span residues 70-177 (EENV…QSQR) and 201-280 (CVSL…TLNL). Residues 211 to 469 (LKEARKASGE…QAKLDTFLWS (259 aa)) are interaction with CYLD. A Glycyl lysine isopeptide (Lys-Gly) (interchain with G-Cter in SUMO2) cross-link involves residue Lys-304. The PIP-box motif lies at 460–469 (QAKLDTFLWS).

Belongs to the TRAIP family. As to quaternary structure, interacts (via PIP-box) with PCNA. Binds TRAF1, TRAF2, TRAF3, TRAF5 and TRAF6 is part of the receptor-TRAF signaling complex. May interact with CYLD; the C-terminus interacts with CYLD, however the interaction was not detected with the full-length protein. Interacts with POLK and POLN. Interacts with UIMC1. In terms of processing, sumoylated; sumoylation is required for nuclear localization. Sumoylation increases protein stability, possibly by preventing ubiquitination. Autoubiquitinated.

The protein localises to the nucleus. It localises to the nucleoplasm. It is found in the nucleolus. Its subcellular location is the chromosome. The protein resides in the cytoplasm. The protein localises to the perinuclear region. It carries out the reaction S-ubiquitinyl-[E2 ubiquitin-conjugating enzyme]-L-cysteine + [acceptor protein]-L-lysine = [E2 ubiquitin-conjugating enzyme]-L-cysteine + N(6)-ubiquitinyl-[acceptor protein]-L-lysine.. It participates in protein modification; protein ubiquitination. Its function is as follows. E3 ubiquitin ligase required to protect genome stability in response to replication stress. Acts as a key regulator of interstrand cross-link repair, which takes place when both strands of duplex DNA are covalently tethered together, thereby blocking replication and transcription. Controls the choice between the two pathways of replication-coupled interstrand-cross-link repair by mediating ubiquitination of MCM7 subunit of the CMG helicase complex. Short ubiquitin chains on MCM7 promote recruitment of DNA glycosylase NEIL3. If the interstrand cross-link cannot be cleaved by NEIL3, the ubiquitin chains continue to grow on MCM7, promoting the unloading of the CMG helicase complex by the VCP/p97 ATPase, enabling the Fanconi anemia DNA repair pathway. Only catalyzes ubiquitination of MCM7 when forks converge. Also involved in the repair of covalent DNA-protein cross-links (DPCs) during DNA synthesis: promotes ubiquitination of DPCs, leading to their degradation by the proteasome. Has also been proposed to play a role in promoting translesion synthesis by mediating the assembly of 'Lys-63'-linked poly-ubiquitin chains on the Y-family polymerase POLN in order to facilitate bypass of DNA lesions and preserve genomic integrity. The function in translesion synthesis is however controversial. Acts as a regulator of the spindle assembly checkpoint. Also acts as a negative regulator of innate immune signaling by inhibiting activation of NF-kappa-B mediated by TNF. Negatively regulates TLR3/4- and RIG-I-mediated IRF3 activation and subsequent IFNB1 production and cellular antiviral response by promoting 'Lys-48'-linked polyubiquitination of TNK1 leading to its proteasomal degradation. The sequence is that of E3 ubiquitin-protein ligase TRAIP from Homo sapiens (Human).